The sequence spans 340 residues: Uroporphyrinogen decarboxylase (340 aa).

Residues 21–25, Phe-40, Asp-71, Tyr-146, Ser-201, and His-316 each bind substrate; that span reads RQAGR.

The protein belongs to the uroporphyrinogen decarboxylase family. Homodimer.

The protein localises to the cytoplasm. The catalysed reaction is uroporphyrinogen III + 4 H(+) = coproporphyrinogen III + 4 CO2. Its pathway is porphyrin-containing compound metabolism; protoporphyrin-IX biosynthesis; coproporphyrinogen-III from 5-aminolevulinate: step 4/4. Catalyzes the decarboxylation of four acetate groups of uroporphyrinogen-III to yield coproporphyrinogen-III. In Rickettsia bellii (strain RML369-C), this protein is Uroporphyrinogen decarboxylase.